The chain runs to 378 residues: Chaperone protein DnaJ 2 (378 aa).

The J domain maps to 4-68 (DYYAVLGVRR…QKKQVYDLGG (65 aa)). The CR-type zinc-finger motif lies at 130–212 (GTTKDIQVDT…CAGDGRVRSR (83 aa)). Cys143, Cys146, Cys160, Cys163, Cys186, Cys189, Cys200, and Cys203 together coordinate Zn(2+). 4 CXXCXGXG motif repeats span residues 143–150 (CNTCNGEG), 160–167 (CDMCRGRG), 186–193 (CPQCQGFG), and 200–207 (CPECAGDG). 2 disordered regions span residues 297–319 (RPGT…LRGG) and 351–378 (RGEE…FNGR). Residues 358 to 367 (GQFQPGQQGL) are compositionally biased toward polar residues.

Belongs to the DnaJ family. Homodimer. Requires Zn(2+) as cofactor.

It localises to the cytoplasm. Its function is as follows. Participates actively in the response to hyperosmotic and heat shock by preventing the aggregation of stress-denatured proteins and by disaggregating proteins, also in an autonomous, DnaK-independent fashion. Unfolded proteins bind initially to DnaJ; upon interaction with the DnaJ-bound protein, DnaK hydrolyzes its bound ATP, resulting in the formation of a stable complex. GrpE releases ADP from DnaK; ATP binding to DnaK triggers the release of the substrate protein, thus completing the reaction cycle. Several rounds of ATP-dependent interactions between DnaJ, DnaK and GrpE are required for fully efficient folding. Also involved, together with DnaK and GrpE, in the DNA replication of plasmids through activation of initiation proteins. The sequence is that of Chaperone protein DnaJ 2 from Streptomyces coelicolor (strain ATCC BAA-471 / A3(2) / M145).